We begin with the raw amino-acid sequence, 1153 residues long: uncharacterized protein (1153 aa).

The signal sequence occupies residues 1–18; that stretch reads MNKNIFITLLISLLLLSG. Cys-19 carries N-palmitoyl cysteine lipidation. The S-diacylglycerol cysteine moiety is linked to residue Cys-19. 4 helical membrane passes run 289 to 309, 393 to 413, 422 to 442, and 457 to 477; these read VSAI…IGNI, LGFI…FLIF, ALIT…FMLF, and ISYA…SMII.

The protein belongs to the TrbL/VirB6 family.

The protein localises to the cell membrane. This is an uncharacterized protein from Rickettsia conorii (strain ATCC VR-613 / Malish 7).